The chain runs to 476 residues: Tryptophan--tRNA ligase, cytoplasmic (476 aa).

The tract at residues 1–117 (MADMSNGEQG…LIVRFGSSKI (117 aa)) is dispensable to the catalytic activity. Residues 13–69 (SPLELFHSIAAQGELVRDLKARNAAKDEIDSAVKMLLSLKTSYKAATGEDYKVDCPP) form the WHEP-TRS domain. The segment at 63–83 (YKVDCPPGDPAPESGEGLDAT) is disordered. Lys159 is modified (N6-succinyllysine). A 'HIGH' region motif is present at residues 169-178 (PSSEAMHVGH). A 'KMSKS' region motif is present at residues 354-358 (KMSAS). Ser356 carries the post-translational modification Phosphoserine.

It belongs to the class-I aminoacyl-tRNA synthetase family. In terms of assembly, homodimer. Interacts with oxidized form of GAPDH. Proteolytic cleavage generates 2 forms; T1-TrpRS and T2-TrpRS.

Its subcellular location is the cytoplasm. It carries out the reaction tRNA(Trp) + L-tryptophan + ATP = L-tryptophyl-tRNA(Trp) + AMP + diphosphate + H(+). T1-TrpRS has aminoacylation activity while T2-TrpRS lacks it. T1-TrpRS and T2-TrpRS possess angiostatic activity. T2-TrpRS inhibits fluid shear stress-activated responses of endothelial cells. Regulates ERK, Akt, and eNOS activation pathways that are associated with angiogenesis, cytoskeletal reorganization and shear stress-responsive gene expression. In Bos taurus (Bovine), this protein is Tryptophan--tRNA ligase, cytoplasmic (WARS1).